We begin with the raw amino-acid sequence, 170 residues long: Chorion protein S18 (170 aa).

The N-terminal stretch at Met1–Ala17 is a signal peptide. Positions Ala146–Gly159 are enriched in low complexity. Residues Ala146–Tyr170 form a disordered region. Residues Tyr160–Tyr170 are compositionally biased toward polar residues.

The protein belongs to the chorion protein S15/S18 family.

It is found in the secreted. Chorion membrane (egg shell) protein; plays a role in protecting the egg from the environment. The sequence is that of Chorion protein S18 (Cp18) from Drosophila virilis (Fruit fly).